We begin with the raw amino-acid sequence, 277 residues long: Large ribosomal subunit protein uL2 (277 aa).

2 disordered regions span residues 35-57 (RPLH…QGGG) and 222-277 (GVAM…NRRR). Basic residues-rich tracts occupy residues 37–57 (LHSK…QGGG) and 268–277 (VRRRKQNRRR).

This sequence belongs to the universal ribosomal protein uL2 family. Part of the 50S ribosomal subunit. Forms a bridge to the 30S subunit in the 70S ribosome.

In terms of biological role, one of the primary rRNA binding proteins. Required for association of the 30S and 50S subunits to form the 70S ribosome, for tRNA binding and peptide bond formation. It has been suggested to have peptidyltransferase activity; this is somewhat controversial. Makes several contacts with the 16S rRNA in the 70S ribosome. The polypeptide is Large ribosomal subunit protein uL2 (Frankia casuarinae (strain DSM 45818 / CECT 9043 / HFP020203 / CcI3)).